A 198-amino-acid polypeptide reads, in one-letter code: Recombination protein RecR (198 aa).

Residues 56–71 (CKVCGNFSEEDECVIC) form a C4-type zinc finger. In terms of domain architecture, Toprim spans 79-174 (GVICVVEEPK…RVSKLASGLP (96 aa)).

It belongs to the RecR family.

In terms of biological role, may play a role in DNA repair. It seems to be involved in an RecBC-independent recombinational process of DNA repair. It may act with RecF and RecO. The sequence is that of Recombination protein RecR from Tropheryma whipplei (strain TW08/27) (Whipple's bacillus).